A 437-amino-acid chain; its full sequence is tRNA pseudouridine synthase Pus10 (437 aa).

The 123-residue stretch at 76–198 folds into the THUMP domain; that stretch reads VARDVVEHLS…GGGVDIQVNS (123 aa). Aspartate 253 acts as the Nucleophile in catalysis. Residues tyrosine 321 and tyrosine 394 each contribute to the substrate site.

This sequence belongs to the pseudouridine synthase Pus10 family.

It carries out the reaction uridine(54) in tRNA = pseudouridine(54) in tRNA. The enzyme catalyses uridine(55) in tRNA = pseudouridine(55) in tRNA. Functionally, responsible for synthesis of pseudouridine from uracil-54 and uracil-55 in the psi GC loop of transfer RNAs. This chain is tRNA pseudouridine synthase Pus10, found in Aeropyrum pernix (strain ATCC 700893 / DSM 11879 / JCM 9820 / NBRC 100138 / K1).